The following is a 316-amino-acid chain: Acetyl-coenzyme A carboxylase carboxyl transferase subunit alpha (316 aa).

A CoA carboxyltransferase C-terminal domain is found at 39–293 (RLQDKSKALT…RGELLAQLKM (255 aa)).

Belongs to the AccA family. As to quaternary structure, acetyl-CoA carboxylase is a heterohexamer composed of biotin carboxyl carrier protein (AccB), biotin carboxylase (AccC) and two subunits each of ACCase subunit alpha (AccA) and ACCase subunit beta (AccD).

Its subcellular location is the cytoplasm. It carries out the reaction N(6)-carboxybiotinyl-L-lysyl-[protein] + acetyl-CoA = N(6)-biotinyl-L-lysyl-[protein] + malonyl-CoA. It participates in lipid metabolism; malonyl-CoA biosynthesis; malonyl-CoA from acetyl-CoA: step 1/1. In terms of biological role, component of the acetyl coenzyme A carboxylase (ACC) complex. First, biotin carboxylase catalyzes the carboxylation of biotin on its carrier protein (BCCP) and then the CO(2) group is transferred by the carboxyltransferase to acetyl-CoA to form malonyl-CoA. This Pseudomonas aeruginosa (strain UCBPP-PA14) protein is Acetyl-coenzyme A carboxylase carboxyl transferase subunit alpha.